A 343-amino-acid polypeptide reads, in one-letter code: Phosphoribosylformylglycinamidine cyclo-ligase (343 aa).

The protein belongs to the AIR synthase family.

The protein resides in the cytoplasm. The catalysed reaction is 2-formamido-N(1)-(5-O-phospho-beta-D-ribosyl)acetamidine + ATP = 5-amino-1-(5-phospho-beta-D-ribosyl)imidazole + ADP + phosphate + H(+). It participates in purine metabolism; IMP biosynthesis via de novo pathway; 5-amino-1-(5-phospho-D-ribosyl)imidazole from N(2)-formyl-N(1)-(5-phospho-D-ribosyl)glycinamide: step 2/2. This chain is Phosphoribosylformylglycinamidine cyclo-ligase, found in Enterococcus faecalis (strain ATCC 700802 / V583).